Here is a 232-residue protein sequence, read N- to C-terminus: MAQSKRVKAIAAAVAPGKAYAFEDAIKILKTATKAKFVESIDVAVRLGVDAKKSDQQVRGSTVLPAGTGKSVRVAVFAPAGAKADEALAAGAEAVGMDDLAEKMQAGDLSYDVVIATPDAMRVVGKLGTLLGPRGLMPNPKVGTVSANPGEAVKNAKSGQVRYRTDKASIIHCTIGKASFDDEALKSNLQALLLDLVKAKPATSKGTYLQKVSVSSTMGPGVTVDQSSLSLK.

Belongs to the universal ribosomal protein uL1 family. As to quaternary structure, part of the 50S ribosomal subunit.

In terms of biological role, binds directly to 23S rRNA. The L1 stalk is quite mobile in the ribosome, and is involved in E site tRNA release. Functionally, protein L1 is also a translational repressor protein, it controls the translation of the L11 operon by binding to its mRNA. The sequence is that of Large ribosomal subunit protein uL1 from Xanthomonas oryzae pv. oryzae (strain KACC10331 / KXO85).